Consider the following 299-residue polypeptide: tRNA pseudouridine synthase B (299 aa).

The active-site Nucleophile is aspartate 39.

Belongs to the pseudouridine synthase TruB family. Type 1 subfamily.

The catalysed reaction is uridine(55) in tRNA = pseudouridine(55) in tRNA. Its function is as follows. Responsible for synthesis of pseudouridine from uracil-55 in the psi GC loop of transfer RNAs. This chain is tRNA pseudouridine synthase B, found in Syntrophomonas wolfei subsp. wolfei (strain DSM 2245B / Goettingen).